The chain runs to 24 residues: Caerulein precursor fragment B4 (24 aa).

In terms of tissue distribution, expressed by the skin glands.

It is found in the secreted. In terms of biological role, has antibacterial and antifungal activity. The protein is Caerulein precursor fragment B4 of Xenopus borealis (Kenyan clawed frog).